Reading from the N-terminus, the 130-residue chain is Sec-independent protein translocase protein TatB (130 aa).

Residues 2-22 form a helical membrane-spanning segment; the sequence is FANIGWGEMLVLVVVGLVVLG. The tract at residues 108–130 is disordered; the sequence is DAVASAQEAPDEPVRPPFDSDAT.

The protein belongs to the TatB family. In terms of assembly, the Tat system comprises two distinct complexes: a TatABC complex, containing multiple copies of TatA, TatB and TatC subunits, and a separate TatA complex, containing only TatA subunits. Substrates initially bind to the TatABC complex, which probably triggers association of the separate TatA complex to form the active translocon.

The protein localises to the cell membrane. Its function is as follows. Part of the twin-arginine translocation (Tat) system that transports large folded proteins containing a characteristic twin-arginine motif in their signal peptide across membranes. Together with TatC, TatB is part of a receptor directly interacting with Tat signal peptides. TatB may form an oligomeric binding site that transiently accommodates folded Tat precursor proteins before their translocation. The polypeptide is Sec-independent protein translocase protein TatB (Mycobacterium ulcerans (strain Agy99)).